A 73-amino-acid chain; its full sequence is Mucroporin-like peptide (73 aa).

The signal sequence occupies residues 1 to 22; sequence MKVKCLLAVFLIVLIAAEHCQA. K38 carries the lysine amide modification. Residues 44–73 constitute a propeptide that is removed on maturation; that stretch reads ELGTQFQPRQKNFMRREVDLERLFAEMPDY.

Belongs to the non-disulfide-bridged peptide (NDBP) superfamily. Short antimicrobial peptide (group 4) family. In terms of tissue distribution, expressed by the venom gland.

The protein localises to the secreted. Its subcellular location is the target cell membrane. Cationic host defense peptide that have antibacterial activity by breaking membranes. Is more effective on Gram-positive than on Gram-negative bacteria. This is Mucroporin-like peptide from Lychas mucronatus (Chinese swimming scorpion).